A 272-amino-acid chain; its full sequence is Transcription factor E2F6 (272 aa).

Positions 1–62 (MSQQRTARRQ…MRKALKVKRP (62 aa)) are binding to corepressors. Residues 50 to 129 (YVSMRKALKV…SKNHIRWIGS (80 aa)) mediate DNA binding. Residues 95 to 129 (KLGVRKRRVYDITNVLDGIELVEKKSKNHIRWIGS) carry the DEF box motif. Residues 130–222 (DLNNFGAAPQ…PAPREDSITV (93 aa)) are dimerization. Positions 143-164 (LQAELSDLSAMEDALDELIKDC) are leucine-zipper. A transcription repression region spans residues 173–272 (DDKENERLAY…CPEKEDEPPQ (100 aa)). The segment at 242–272 (HSNGKTNDGIGASPSKSSHPQCPEKEDEPPQ) is disordered.

The protein belongs to the E2F/DP family. Forms heterodimers with DP family members TFDP1 or TFDP2. Component of the DRTF1/E2F transcription factor complex. Part of the E2F6.com-1 complex in G0 phase composed of E2F6, MGA, MAX, TFDP1, CBX3, BAT8, EUHMTASE1, RING1, RNF2, MBLR, L3MBTL2 and YAF2. Component of some MLL1/MLL complex, at least composed of the core components KMT2A/MLL1, ASH2L, HCFC1/HCF1, WDR5 and RBBP5, as well as the facultative components BACC1, CHD8, E2F6, HSP70, INO80C, KANSL1, LAS1L, MAX, MCRS1, MGA, KAT8/MOF, PELP1, PHF20, PRP31, RING2, RUVB1/TIP49A, RUVB2/TIP49B, SENP3, TAF1, TAF4, TAF6, TAF7, TAF9 and TEX10.

The protein localises to the nucleus. Functionally, inhibitor of E2F-dependent transcription. Binds DNA cooperatively with DP proteins through the E2 recognition site, 5'-TTTC[CG]CGC-3'. Has a preference for the 5'-TTTCCCGC-3' E2F recognition site. E2F6 lacks the transcriptional activation and pocket protein binding domains. Appears to regulate a subset of E2F-dependent genes whose products are required for entry into the cell cycle but not for normal cell cycle progression. Represses expression of some meiosis-specific genes, including SLC25A31/ANT4. May silence expression via the recruitment of a chromatin remodeling complex containing histone H3-K9 methyltransferase activity. Overexpression delays the exit of cells from the S-phase. The polypeptide is Transcription factor E2F6 (Mus musculus (Mouse)).